The primary structure comprises 116 residues: Protein Rev (116 aa).

Residues Ser-5 and Ser-8 each carry the phosphoserine; by host CK2 modification. The segment at Leu-18–Asn-26 is homomultimerization. The interval Tyr-23–Gln-49 is disordered. Residues Thr-34 to Arg-50 carry the Nuclear localization signal and RNA-binding (RRE) motif. The span at Gln-36–Glu-47 shows a compositional bias: basic residues. Residues Leu-73–Asp-84 carry the Nuclear export signal and binding to XPO1 motif. Phosphoserine; by host is present on residues Ser-92 and Ser-99.

This sequence belongs to the HIV-1 REV protein family. As to quaternary structure, homomultimer; when bound to the RRE. Multimeric assembly is essential for activity and may involve XPO1. Binds to human KPNB1, XPO1, TNPO1, RANBP5 and IPO7. Interacts with the viral Integrase. Interacts with human KHDRBS1. Interacts with human NAP1; this interaction decreases Rev multimerization and stimulates its activity. Interacts with human DEAD-box helicases DDX3 and DDX24; these interactions may serve for viral RNA export to the cytoplasm and packaging, respectively. Interacts with human PSIP1; this interaction may inhibit HIV-1 DNA integration by promoting dissociation of the Integrase-LEDGF/p75 complex. Post-translationally, asymmetrically arginine dimethylated at one site by host PRMT6. Methylation impairs the RNA-binding activity and export of viral RNA from the nucleus to the cytoplasm. Phosphorylated by protein kinase CK2. Presence of, and maybe binding to the N-terminus of the regulatory beta subunit of CK2 is necessary for CK2-mediated Rev's phosphorylation.

The protein localises to the host nucleus. It is found in the host nucleolus. The protein resides in the host cytoplasm. Escorts unspliced or incompletely spliced viral pre-mRNAs (late transcripts) out of the nucleus of infected cells. These pre-mRNAs carry a recognition sequence called Rev responsive element (RRE) located in the env gene, that is not present in fully spliced viral mRNAs (early transcripts). This function is essential since most viral proteins are translated from unspliced or partially spliced pre-mRNAs which cannot exit the nucleus by the pathway used by fully processed cellular mRNAs. Rev itself is translated from a fully spliced mRNA that readily exits the nucleus. Rev's nuclear localization signal (NLS) binds directly to KPNB1/Importin beta-1 without previous binding to KPNA1/Importin alpha-1. KPNB1 binds to the GDP bound form of RAN (Ran-GDP) and targets Rev to the nucleus. In the nucleus, the conversion from Ran-GDP to Ran-GTP dissociates Rev from KPNB1 and allows Rev's binding to the RRE in viral pre-mRNAs. Rev multimerization on the RRE via cooperative assembly exposes its nuclear export signal (NES) to the surface. Rev can then form a complex with XPO1/CRM1 and Ran-GTP, leading to nuclear export of the complex. Conversion from Ran-GTP to Ran-GDP mediates dissociation of the Rev/RRE/XPO1/RAN complex, so that Rev can return to the nucleus for a subsequent round of export. Beside KPNB1, also seems to interact with TNPO1/Transportin-1, RANBP5/IPO5 and IPO7/RANBP7 for nuclear import. The nucleoporin-like HRB/RIP is an essential cofactor that probably indirectly interacts with Rev to release HIV RNAs from the perinuclear region to the cytoplasm. This Human immunodeficiency virus type 1 group M subtype B (isolate PCV12) (HIV-1) protein is Protein Rev.